The following is a 447-amino-acid chain: Probable glycine dehydrogenase (decarboxylating) subunit 1 (447 aa).

The protein belongs to the GcvP family. N-terminal subunit subfamily. As to quaternary structure, the glycine cleavage system is composed of four proteins: P, T, L and H. In this organism, the P 'protein' is a heterodimer of two subunits.

It carries out the reaction N(6)-[(R)-lipoyl]-L-lysyl-[glycine-cleavage complex H protein] + glycine + H(+) = N(6)-[(R)-S(8)-aminomethyldihydrolipoyl]-L-lysyl-[glycine-cleavage complex H protein] + CO2. In terms of biological role, the glycine cleavage system catalyzes the degradation of glycine. The P protein binds the alpha-amino group of glycine through its pyridoxal phosphate cofactor; CO(2) is released and the remaining methylamine moiety is then transferred to the lipoamide cofactor of the H protein. The polypeptide is Probable glycine dehydrogenase (decarboxylating) subunit 1 (Bacillus cereus (strain ATCC 10987 / NRS 248)).